A 357-amino-acid chain; its full sequence is Dual-specificity RNA methyltransferase RlmN (357 aa).

The Proton acceptor role is filled by E89. The Radical SAM core domain occupies 109-340; it reads EREKYTVCVS…CTIRESKALD (232 aa). The cysteines at positions 116 and 345 are disulfide-linked. The [4Fe-4S] cluster site is built by C123, C127, and C130. S-adenosyl-L-methionine contacts are provided by residues 173–174, S203, 226–228, and N302; these read GE and SLH. C345 serves as the catalytic S-methylcysteine intermediate.

Belongs to the radical SAM superfamily. RlmN family. It depends on [4Fe-4S] cluster as a cofactor.

It is found in the cytoplasm. It carries out the reaction adenosine(2503) in 23S rRNA + 2 reduced [2Fe-2S]-[ferredoxin] + 2 S-adenosyl-L-methionine = 2-methyladenosine(2503) in 23S rRNA + 5'-deoxyadenosine + L-methionine + 2 oxidized [2Fe-2S]-[ferredoxin] + S-adenosyl-L-homocysteine. The catalysed reaction is adenosine(37) in tRNA + 2 reduced [2Fe-2S]-[ferredoxin] + 2 S-adenosyl-L-methionine = 2-methyladenosine(37) in tRNA + 5'-deoxyadenosine + L-methionine + 2 oxidized [2Fe-2S]-[ferredoxin] + S-adenosyl-L-homocysteine. Specifically methylates position 2 of adenine 2503 in 23S rRNA and position 2 of adenine 37 in tRNAs. m2A2503 modification seems to play a crucial role in the proofreading step occurring at the peptidyl transferase center and thus would serve to optimize ribosomal fidelity. The chain is Dual-specificity RNA methyltransferase RlmN from Helicobacter pylori (strain ATCC 700392 / 26695) (Campylobacter pylori).